We begin with the raw amino-acid sequence, 346 residues long: DNA primase small subunit PriS (346 aa).

Residues Asp-95 and Asp-97 contribute to the active site. Zn(2+) is bound by residues Cys-106, His-108, Cys-114, and Cys-117. Positions 106-117 match the Zinc knuckle motif motif; it reads CEHEPGTVCPIC. Asp-280 is a catalytic residue.

Belongs to the eukaryotic-type primase small subunit family. Heterodimer of a small subunit (PriS) and a large subunit (PriL). It depends on Mg(2+) as a cofactor. Mn(2+) is required as a cofactor.

Catalytic subunit of DNA primase, an RNA polymerase that catalyzes the synthesis of short RNA molecules used as primers for DNA polymerase during DNA replication. The small subunit contains the primase catalytic core and has DNA synthesis activity on its own. Binding to the large subunit stabilizes and modulates the activity, increasing the rate of DNA synthesis while decreasing the length of the DNA fragments, and conferring RNA synthesis capability. The DNA polymerase activity may enable DNA primase to also catalyze primer extension after primer synthesis. May also play a role in DNA repair. The chain is DNA primase small subunit PriS from Pyrococcus horikoshii (strain ATCC 700860 / DSM 12428 / JCM 9974 / NBRC 100139 / OT-3).